A 112-amino-acid chain; its full sequence is UPF0060 membrane protein Arth_4238 (112 aa).

4 helical membrane-spanning segments follow: residues 7–27 (ILLF…VWQA), 33–53 (EWWW…AATL), 62–82 (ILAA…MVFD), and 88–108 (RWDI…MFAP).

Belongs to the UPF0060 family.

It localises to the cell membrane. The polypeptide is UPF0060 membrane protein Arth_4238 (Arthrobacter sp. (strain FB24)).